A 503-amino-acid polypeptide reads, in one-letter code: ATP synthase subunit alpha (503 aa).

ATP is bound at residue 170-177 (GDRQTGKT).

Belongs to the ATPase alpha/beta chains family. In terms of assembly, F-type ATPases have 2 components, CF(1) - the catalytic core - and CF(0) - the membrane proton channel. CF(1) has five subunits: alpha(3), beta(3), gamma(1), delta(1), epsilon(1). CF(0) has three main subunits: a(1), b(2) and c(9-12). The alpha and beta chains form an alternating ring which encloses part of the gamma chain. CF(1) is attached to CF(0) by a central stalk formed by the gamma and epsilon chains, while a peripheral stalk is formed by the delta and b chains.

It localises to the cell inner membrane. The catalysed reaction is ATP + H2O + 4 H(+)(in) = ADP + phosphate + 5 H(+)(out). Its function is as follows. Produces ATP from ADP in the presence of a proton gradient across the membrane. The alpha chain is a regulatory subunit. In Thermotoga maritima (strain ATCC 43589 / DSM 3109 / JCM 10099 / NBRC 100826 / MSB8), this protein is ATP synthase subunit alpha.